The chain runs to 235 residues: Ribonuclease PH (235 aa).

Phosphate contacts are provided by residues Arg-86 and Gly-124–Arg-126.

It belongs to the RNase PH family. As to quaternary structure, homohexameric ring arranged as a trimer of dimers.

It carries out the reaction tRNA(n+1) + phosphate = tRNA(n) + a ribonucleoside 5'-diphosphate. In terms of biological role, phosphorolytic 3'-5' exoribonuclease that plays an important role in tRNA 3'-end maturation. Removes nucleotide residues following the 3'-CCA terminus of tRNAs; can also add nucleotides to the ends of RNA molecules by using nucleoside diphosphates as substrates, but this may not be physiologically important. Probably plays a role in initiation of 16S rRNA degradation (leading to ribosome degradation) during starvation. The polypeptide is Ribonuclease PH (Francisella philomiragia subsp. philomiragia (strain ATCC 25017 / CCUG 19701 / FSC 153 / O#319-036)).